The primary structure comprises 350 residues: MSAACWEEPWGLPGGFAKRVLVTGGAGFIASHMIVSLVEDYPNYMIINLDKLDYCASLKNLETISNKQNYKFIQGDICDSHFVKLLFETEKIDIVLHFAAQTHVDLSFVRAFEFTYVNVYGTHVLVSAAHEARVEKFIYVSTDEVYGGSLDKEFDESSPKQPTNPYASSKAAAECFVQSYWEQYKFPVVITRSSNVYGPHQYPEKVIPKFISLLQHNRKCCIHGSGLQTRNFLYATDVVEAFLTVLKKGKPGEIYNIGTNFEMSVVQLAKELIQLIKETNSESEMENWVDYVNDRPTNDMRYPMKSEKIHGLGWRPKVPWKEGIKKTIEWYRENFHNWKNVEKALEPFPV.

Thr-142 provides a ligand contact to substrate. Asp-143 serves as the catalytic Proton donor. Catalysis depends on proton acceptor residues Glu-144 and Tyr-166.

It belongs to the NAD(P)-dependent epimerase/dehydratase family. dTDP-glucose dehydratase subfamily. The cofactor is NAD(+).

It carries out the reaction dTDP-alpha-D-glucose = dTDP-4-dehydro-6-deoxy-alpha-D-glucose + H2O. This is dTDP-D-glucose 4,6-dehydratase (TGDS) from Homo sapiens (Human).